We begin with the raw amino-acid sequence, 561 residues long: Cloacin (561 aa).

3 stretches are compositionally biased toward gly residues: residues 1–21 (MSGG…GGQA), 29–40 (SGKGGPSSGGGT), and 66–91 (FGNG…GGGQ). Disordered regions lie at residues 1–93 (MSGG…GQSS), 254–273 (PKGI…TAGG), 304–326 (VKQR…PEEG), 432–507 (KAAL…KRAR), and 530–561 (RASD…KKYL). The tract at residues 1–180 (MSGGDGRGPG…DTVTETPAST (180 aa)) is involved in the translocation of the protein across the cell membrane. The responsible for the receptor binding activity stretch occupies residues 200-420 (DERQHIAVVA…NAKLKAAQAS (221 aa)). Basic and acidic residues-rich tracts occupy residues 306–326 (QRQE…PEEG) and 440–494 (ESRK…EGKP). Residues 421–561 (LNAMNDALSR…DPKRNIKKYL (141 aa)) form a ribonuclease activity region. Residues 540 to 561 (FDPKTGKQVKGPDPKRNIKKYL) are binding of immunity protein.

It belongs to the cloacin colicin family.

In terms of biological role, inactivates ribosomes by hydrolyzing 16S RNA in 30S ribosomes at a specific site. Its function is as follows. Colicins are polypeptide toxins produced by and active against E.coli and closely related bacteria. The polypeptide is Cloacin (ccl) (Escherichia coli).